The primary structure comprises 363 residues: MSVDSFTSRLAVVMTAVVLVWWAQALPVPSPRRGESDCDAACRKFLLQYGYLDLGEENCTEVDSNRKLCSVDDELVGVPRPLARVDLAAGVSHLQTMAGLEPTGRIDASTARLFTSPRCGVPDVSKYIVAAGRRRRTRRESVIVCTTRWTTTKSNSNETLVKWWLDQSSMQWLNSTLNWVSLTNVLHHSFWKWSKESMLAFQQVSLERDAQIVVRFENGSHGDGWDFDGPGNVLAHAFQPGQSLGGDIHLDAAEPWTIYDIDGHDGNSILHVVLHEIGHALGLEHSRDPTSIMYAWYTPFKYDLGPEDVSAVAGLYGAKPASSVAAWNPKIQKFYWDRHVRNDLLPLLERDLDAEEEDSDEVR.

The first 25 residues, 1–25 (MSVDSFTSRLAVVMTAVVLVWWAQA), serve as a signal peptide directing secretion. Residues 26–126 (LPVPSPRRGE…PRCGVPDVSK (101 aa)) constitute a propeptide, activation peptide. The Cysteine switch signature appears at 117–124 (PRCGVPDV). Zn(2+) contacts are provided by cysteine 119 and histidine 275. Glutamate 276 is a catalytic residue. Residues histidine 279 and histidine 285 each coordinate Zn(2+).

Belongs to the peptidase M10A family. Requires Zn(2+) as cofactor.

The protein resides in the secreted. Probable endopeptidase. The polypeptide is Probable matrix metalloproteinase 095L (Aedes vexans (Inland floodwater mosquito)).